The primary structure comprises 533 residues: Beta-xylosidase (533 aa).

Asp-14 serves as the catalytic Proton acceptor. The active-site Proton donor is Glu-186.

It belongs to the glycosyl hydrolase 43 family. In terms of assembly, homodimer.

The protein localises to the cell membrane. It carries out the reaction Hydrolysis of (1-&gt;4)-beta-D-xylans, to remove successive D-xylose residues from the non-reducing termini.. The sequence is that of Beta-xylosidase (xynB) from Bacillus subtilis (strain 168).